The following is a 447-amino-acid chain: Chromosomal replication initiator protein DnaA (447 aa).

The tract at residues 1–66 (MSNRIISILK…SKAIKEAYGK (66 aa)) is domain I, interacts with DnaA modulators. The interval 66-102 (KNLDYEIVYETTEPEAFNKSNESYKGPLVKKKPLLIS) is domain II. The segment at 103–319 (NLNANYTFEN…GVIIKLIVQS (217 aa)) is domain III, AAA+ region. Residues Gly-146, Gly-148, Lys-149, and Thr-150 each contribute to the ATP site. The tract at residues 320–447 (SINKERIGAA…NTMATSSAAG (128 aa)) is domain IV, binds dsDNA.

This sequence belongs to the DnaA family. In terms of assembly, oligomerizes as a right-handed, spiral filament on DNA at oriC.

It is found in the cytoplasm. Plays an essential role in the initiation and regulation of chromosomal replication. ATP-DnaA binds to the origin of replication (oriC) to initiate formation of the DNA replication initiation complex once per cell cycle. Binds the DnaA box (a 9 base pair repeat at the origin) and separates the double-stranded (ds)DNA. Forms a right-handed helical filament on oriC DNA; dsDNA binds to the exterior of the filament while single-stranded (ss)DNA is stabiized in the filament's interior. The ATP-DnaA-oriC complex binds and stabilizes one strand of the AT-rich DNA unwinding element (DUE), permitting loading of DNA polymerase. After initiation quickly degrades to an ADP-DnaA complex that is not apt for DNA replication. Binds acidic phospholipids. The chain is Chromosomal replication initiator protein DnaA from Kosmotoga olearia (strain ATCC BAA-1733 / DSM 21960 / TBF 19.5.1).